Reading from the N-terminus, the 41-residue chain is Photosystem II reaction center protein L (41 aa).

Residues 20 to 40 (SLYLGLLLVFVVGLLFSSYFL) traverse the membrane as a helical segment.

The protein belongs to the PsbL family. In terms of assembly, PSII is composed of 1 copy each of membrane proteins PsbA, PsbB, PsbC, PsbD, PsbE, PsbF, PsbH, PsbI, PsbJ, PsbK, PsbL, PsbM, PsbT, PsbX, PsbY, PsbZ, Psb30/Ycf12, peripheral proteins PsbO, CyanoQ (PsbQ), PsbU, PsbV and a large number of cofactors. It forms dimeric complexes.

The protein resides in the cellular thylakoid membrane. One of the components of the core complex of photosystem II (PSII). PSII is a light-driven water:plastoquinone oxidoreductase that uses light energy to abstract electrons from H(2)O, generating O(2) and a proton gradient subsequently used for ATP formation. It consists of a core antenna complex that captures photons, and an electron transfer chain that converts photonic excitation into a charge separation. This subunit is found at the monomer-monomer interface and is required for correct PSII assembly and/or dimerization. The chain is Photosystem II reaction center protein L from Synechococcus sp. (strain JA-2-3B'a(2-13)) (Cyanobacteria bacterium Yellowstone B-Prime).